The sequence spans 323 residues: MDLNTILIILGIIALIILVVHGLWANRREKSQYFKSANTFTRDSRLREPPAHIQSASEEKKDANTSTPTAEVSPAQRTFAFEAEKQFAHEQQAVEQAIENIKITLPKEEQPYQAKIEPDTPPTSPALTTIAEVENYANQEEGIDTHSEQLRQQLADLAQQSPSVTLAALQEEQALMESQAQQQASEDVRQDTDATFIMMYVVAPENYQFQGARLAKILDELGFLFGEHNIYHRHSDLSVNSPVLFSVANIEQPGTFDYNMHDFSTVGIALFMQLPSEGNDLMNLRMMIRAAKSIAEDLGGFVLTDQQAIFDDQAEKAYLDKVR.

The Periplasmic portion of the chain corresponds to Met-1–Asn-4. A helical transmembrane segment spans residues Thr-5–Ala-25. The Cytoplasmic portion of the chain corresponds to Asn-26 to Arg-323. The interval Ser-44–Ser-73 is disordered.

Belongs to the ZipA family. Interacts with FtsZ via their C-terminal domains.

Its subcellular location is the cell inner membrane. Functionally, essential cell division protein that stabilizes the FtsZ protofilaments by cross-linking them and that serves as a cytoplasmic membrane anchor for the Z ring. Also required for the recruitment to the septal ring of downstream cell division proteins. The sequence is that of Cell division protein ZipA from Pasteurella multocida (strain Pm70).